A 237-amino-acid chain; its full sequence is Sugar fermentation stimulation protein homolog (237 aa).

This sequence belongs to the SfsA family.

The protein is Sugar fermentation stimulation protein homolog of Pseudomonas syringae pv. tomato (strain ATCC BAA-871 / DC3000).